The sequence spans 564 residues: 5-hydroxytryptamine receptor 1 (564 aa).

Residues Met1 to His26 are disordered. Over residues His11 to Gln23 the composition is skewed to basic residues. The helical transmembrane segment at Leu29–Gly51 threads the bilayer. Repeat copies occupy residues Gly89–Ser90, Gly91–Ser92, Gly93–Ser94, Gly95–Ser96, Gly97–Ser98, Gly99–Ser100, Gly101–Ser102, Gly103–Ser104, and Gly105–Ser106. The interval Gly89–Ser106 is 9 X 2 AA tandem repeats of G-S. The helical transmembrane segment at Val165–Cys188 threads the bilayer. The Cytoplasmic segment spans residues Met189–Asn198. Residues Tyr199 to Tyr222 form a helical membrane-spanning segment. Topologically, residues Glu223–Asp236 are extracellular. A disulfide bond links Cys235 and Cys314. The helical transmembrane segment at Ile237 to Val258 threads the bilayer. The agonist binding stretch occupies residues Trp238–Thr247. Residues Asp242 and Thr247 each coordinate ergotamine. The DRY motif; important for ligand-induced conformation changes motif lies at Asp259–Tyr261. Over Asp259–Arg278 the chain is Cytoplasmic. A helical membrane pass occupies residues Met279–Gly302. The Extracellular segment spans residues Asn303–Ser330. The chain crosses the membrane as a helical span at residues Phe331–Val353. Topologically, residues Leu354–Thr454 are cytoplasmic. Residues Leu367 to Ser396 are disordered. The segment covering Leu386–Ser396 has biased composition (polar residues). The chain crosses the membrane as a helical span at residues Thr455 to Ile476. The Extracellular segment spans residues Arg477–Ser487. A helical transmembrane segment spans residues Leu488–Leu510. An NPxxY motif; important for ligand-induced conformation changes and signaling motif is present at residues Asn503–Tyr507. The Cytoplasmic portion of the chain corresponds to Asn511 to Leu564.

The protein belongs to the G-protein coupled receptor 1 family. 5-hydroxytryptamine receptor subfamily. In terms of tissue distribution, expressed predominantly in adult heads.

It is found in the cell membrane. G-protein coupled receptor for 5-hydroxytryptamine (serotonin). Also functions as a receptor for various alkaloids. Ligand binding causes a conformation change that triggers signaling via guanine nucleotide-binding proteins (G proteins) and modulates the activity of down-stream effectors, such as adenylate cyclase. Signaling activates adenylate cyclase activity. The polypeptide is 5-hydroxytryptamine receptor 1 (5-HT7) (Drosophila melanogaster (Fruit fly)).